The primary structure comprises 615 residues: Forkhead box protein O (615 aa).

Disordered stretches follow at residues 39–77 (RARS…DSQQ), 182–205 (KSVR…RAKK), 217–269 (GLND…RLSP), 318–359 (FSAA…APGY), and 389–409 (NSVT…SDSL). Threonine 44 is modified (phosphothreonine; by PKB/AKT1). Positions 63 to 77 (TKASNQQLAPGDSQQ) are enriched in polar residues. The residue at position 75 (serine 75) is a Phosphoserine. The segment at residues 95–201 (WGNLSYADLI…ETSRYEKRRG (107 aa)) is a DNA-binding region (fork-head). Serine 190 carries the phosphoserine; by PKB/AKT1 modification. Polar residues-rich tracts occupy residues 221 to 230 (ATPSPSSSVS) and 256 to 265 (RASSNASSCG). A Phosphoserine; by PKB/AKT1 modification is found at serine 259. Residues serine 262, serine 263, and serine 268 each carry the phosphoserine modification. Over residues 326–335 (SQPPPPPYQP) the composition is skewed to pro residues. Low complexity predominate over residues 336–351 (PQHQQAQQQQQQSPYA).

In terms of assembly, interacts with melt.

It is found in the cytoplasm. The protein localises to the nucleus. Its function is as follows. Transcription factor involved in the regulation of the insulin signaling pathway. Consistently activates both the downstream target Thor\d4EBP and the feedback control target InR. Involved in negative regulation of the cell cycle, modulating cell growth and proliferation. In response to cellular stresses, such as nutrient deprivation or increased levels of reactive oxygen species, foxo is activated and inhibits growth through the action of target genes such as Thor. Foxo activated in the adult fat body can regulate lifespan in adults; an insulin peptide itself may function as one secondary messenger of insulin-regulated aging. Also regulates Lip4, homolog of human acid lipases, thereby acting as a key modulator of lipid metabolism by insulin signaling and integrates insulin responses to glucose and lipid homeostasis. The polypeptide is Forkhead box protein O (Drosophila erecta (Fruit fly)).